Reading from the N-terminus, the 737-residue chain is MSSGDPPSGLQASGSNSSAALGLSPPSAPSGKSAATPPKVATDDASVELSSMKSERSPAKSIPLGEDIMQVARIGEVSVMQKLFDEKKFTANYSDEEGITPLHWAAINNQYAMCKFLIDSGADVNAKGGESVATPAMWAAQRCHYYIVHLLLQYGADPLLTDVQGYNILHLATIDGNAFLLVLLLHQEIPVDVVDQQGHTGLMWAAYKGYPACVDLFLRWGANPNAVDDGGLAPLHWALVKGSLPCVLKILEYGADRFATTTDGKTPALVAQEMNTRHVWYRALSECGYDADGNRKVLPMGLGPYVRDKAIMSKFFFFWPFLLLFVVLWILSNMVVYFAIPVAAVAVFGLQWVAKKAASQGPSEFRIIQKTPFLAGVFAGSLFWVFVRYVLYVLPATYSTNPFLNLGFVVFFSLTTYFYFYSMVADPGYVPKLGSRNEQRAVIGQLFEEWKFDEENFCVYCMIRRPLRSKHCRRCSRCVAKHDHHCPWIDNCVGVNNLRQFVLYILCLEIGIILFLHLTFNYINGLPAPAEPICNILNDQICSFVLRDTFTLLLDVWIAIQLVWVTMLGVVQLVQVSRNQTTYENMRGHSLDRGHSSTRAFASAVTAGTTSLDAAGLSASGQGPNPALAQGGHRHRGGCLKQWSSLLGFDTFFATARDGLRDGPRAARPRNPFSRGIVTNCRDFWCDPAPYFGKREPGSAMLGGEIVNYNRMYETPSRMYSSGDYRSVAYDEAADIV.

Residues 1–60 (MSSGDPPSGLQASGSNSSAALGLSPPSAPSGKSAATPPKVATDDASVELSSMKSERSPAK) form a disordered region. Topologically, residues 1–314 (MSSGDPPSGL…YVRDKAIMSK (314 aa)) are cytoplasmic. Residues 7-38 (PSGLQASGSNSSAALGLSPPSAPSGKSAATPP) show a composition bias toward low complexity. ANK repeat units follow at residues 97–126 (EGIT…DVNA), 131–160 (SVAT…DPLL), 164–193 (QGYN…PVDV), 197–226 (QGHT…NPNA), and 230–259 (GGLA…DRFA). The next 2 membrane-spanning stretches (helical) occupy residues 315–335 (FFFF…SNMV) and 336–356 (VYFA…VAKK). The Cytoplasmic segment spans residues 357-372 (AASQGPSEFRIIQKTP). The helical transmembrane segment at 373-393 (FLAGVFAGSLFWVFVRYVLYV) threads the bilayer. The Lumenal portion of the chain corresponds to 394–402 (LPATYSTNP). The helical transmembrane segment at 403–423 (FLNLGFVVFFSLTTYFYFYSM) threads the bilayer. Residues 424–500 (VADPGYVPKL…NCVGVNNLRQ (77 aa)) are Cytoplasmic-facing. A DHHC domain is found at 456 to 506 (NFCVYCMIRRPLRSKHCRRCSRCVAKHDHHCPWIDNCVGVNNLRQFVLYIL). Cysteine 486 acts as the S-palmitoyl cysteine intermediate in catalysis. A helical transmembrane segment spans residues 501–521 (FVLYILCLEIGIILFLHLTFN). Topologically, residues 522 to 549 (YINGLPAPAEPICNILNDQICSFVLRDT) are lumenal. A helical transmembrane segment spans residues 550–570 (FTLLLDVWIAIQLVWVTMLGV). Residues 571–737 (VQLVQVSRNQ…VAYDEAADIV (167 aa)) lie on the Cytoplasmic side of the membrane.

It belongs to the DHHC palmitoyltransferase family. AKR/ZDHHC17 subfamily.

The protein resides in the early endosome membrane. Its subcellular location is the golgi apparatus membrane. It carries out the reaction L-cysteinyl-[protein] + hexadecanoyl-CoA = S-hexadecanoyl-L-cysteinyl-[protein] + CoA. Its function is as follows. Palmitoyltransferase specific for casein kinase 1. The sequence is that of Palmitoyltransferase akr1 (akr1) from Emericella nidulans (strain FGSC A4 / ATCC 38163 / CBS 112.46 / NRRL 194 / M139) (Aspergillus nidulans).